The sequence spans 449 residues: XK-related protein 2 (449 aa).

Helical transmembrane passes span 35-55, 68-88, 98-118, 174-194, 202-222, 241-261, 269-289, 306-326, 357-377, and 382-402; these read FSIL…LYMV, TYTF…LIFV, LSLF…EAMI, IQAF…SLIS, VVLM…CNML, LCIT…LVLF, AVPF…IKFW, VGTL…NFSC, LVEN…VLLN, and LIAL…LLFF.

It belongs to the XK family. Expressed predominantly in the placenta, in syncytiotrophoblasts. Moderate levels in the adrenal gland, low levels in the trachea and very low levels in the bone marrow.

The protein localises to the cell membrane. In Homo sapiens (Human), this protein is XK-related protein 2 (XKRX).